The sequence spans 500 residues: Xylan O-acetyltransferase 2 (500 aa).

Topologically, residues 1-25 are cytoplasmic; sequence MGLPGRRNPLLSARRAAASLRRSRR. A helical; Signal-anchor for type II membrane protein transmembrane segment spans residues 26 to 43; the sequence is LPVYVAAVFFVASVLLMF. At 44-500 the chain is on the lumenal side; sequence RDEILYLTTA…RPPAAAGHVA (457 aa). The tract at residues 84–116 is disordered; that stretch reads PVLLGHGGKPEKHHSVTERHRPKVSAKRRPNKK. The segment covering 91 to 102 has biased composition (basic and acidic residues); that stretch reads GKPEKHHSVTER. A compositionally biased stretch (basic residues) spans 103–116; that stretch reads HRPKVSAKRRPNKK. Disulfide bonds link cysteine 143-cysteine 194, cysteine 165-cysteine 231, cysteine 174-cysteine 472, and cysteine 388-cysteine 468. N-linked (GlcNAc...) asparagine glycans are attached at residues asparagine 144 and asparagine 154. Positions 218 to 220 match the GDS motif motif; that stretch reads GDS. Serine 220 functions as the Nucleophile in the catalytic mechanism. Asparagine 260 and asparagine 416 each carry an N-linked (GlcNAc...) asparagine glycan. Aspartate 467 functions as the Proton donor in the catalytic mechanism. A DXXH motif motif is present at residues 467 to 470; sequence DCIH. Histidine 470 (proton acceptor) is an active-site residue.

It belongs to the PC-esterase family. TBL subfamily. In terms of tissue distribution, expressed at low levels in roots and leaves.

It is found in the golgi apparatus membrane. Its function is as follows. Xylan acetyltransferase required for 2-O- and 3-O-monoacetylation of xylosyl residues in xylan. Catalyzes the 2-O-acetylation of xylan, followed by nonenzymatic acetyl migration to the O-3 position, resulting in products that are monoacetylated at both O-2 and O-3 positions. This is Xylan O-acetyltransferase 2 from Oryza sativa subsp. japonica (Rice).